Reading from the N-terminus, the 111-residue chain is uncharacterized protein (111 aa).

The segment at proline 66–serine 94 is disordered. Polar residues predominate over residues alanine 70 to alanine 83.

It is found in the plastid. Its subcellular location is the chloroplast. This is an uncharacterized protein from Chlamydomonas reinhardtii (Chlamydomonas smithii).